The primary structure comprises 65 residues: Light-harvesting protein B-800-850 alpha chain C (65 aa).

Topologically, residues 1 to 11 (MNQGRIWTVVS) are cytoplasmic. The chain crosses the membrane as a helical span at residues 12–35 (PTVGLPLLLGSVAAIAFAVHFAVL). Histidine 31 is an a bacteriochlorophyll binding site. Over 36-65 (ENTSWVAAFMNGKSVAAAPAPAAPAAPAKK) the chain is Periplasmic.

Belongs to the antenna complex alpha subunit family. The core complex is formed by different alpha and beta chains, binding bacteriochlorophyll molecules, and arranged most probably in tetrameric structures disposed around the reaction center. The non-pigmented gamma chains may constitute additional components.

The protein resides in the cell inner membrane. Antenna complexes are light-harvesting systems, which transfer the excitation energy to the reaction centers. The chain is Light-harvesting protein B-800-850 alpha chain C (pucAC) from Rhodopseudomonas palustris.